The chain runs to 24 residues: Myotoxin TmC4-47.2 (24 aa).

The interval 1–24 (KASSSAPKGWTHHGSRFTFHRGSM) is disordered. Positions 10–24 (WTHHGSRFTFHRGSM) are enriched in basic residues. The C-type lectin domain maps to 13-24 (HGSRFTFHRGSM).

Expressed by the venom gland.

It is found in the secreted. Able to depolarize frog skeletal muscle fibers, but has no effects on squid giant axons. Tetrodotoxin is able to partially antagonize the depolarization. Induces myonecrosis. This Thalassophryne maculosa (Cano toadfish) protein is Myotoxin TmC4-47.2.